Here is a 689-residue protein sequence, read N- to C-terminus: MPREFSLENTRNLGIMAHIDAGKTTTTERILFHTGKIHKIGETHEGASQMDWMAQEQERGITITSAATTAFWKNNRFNIIDTPGHVDFTVEVERSLRVLDGAVAVLDGQSGVEPQTETVWRQATTYRVPRIVFVNKMDKTGADFIYSVKSIGDRLGAKAAPIQLPIGAEDNFTGIIDLVEMKAYEFDGKAEEIAKEIEIPADLKDQAEILRSELVEAAVEYDEELMMKFLDGEEITIPELKQAIRKGVIGAEFFPVLAGSAFKNKGVKLLLDAVVDYLPSPLDVPSIKGVLPNGEEAERHADDNEPFSALAFKVMTDPFVGKLTFFRVYSGILTKGSYVLNSTKGDKERVGRILQMHANNRNEIEEVYAGDIAAAVGLKNTTTGDTLVDEKHEIILESMVFPEPVIQLALEPKTKADQEKMGLALSKLAEEDPTFRTYTDEETGQTIIAGMGELHLDIIVDRMRREFKVETNVGAPQVSYRETIKLPAKAEGKYVKQSGGRGSYGHVVIEFEPNVDKGFEWVDKITGGRVSKEYINAARVGLENALTNGVVAGYPMIDVKATIVDGSMHDVDSNEMAYKIAASFALKEACKKMNPVILEPIMNVEVTVPDEYYGDVMGNISSKRGLIEGSEQRGNAQTIKSKVPLTEMFGYATELRSFTQGRGNYTMIFSHYAEAPRSIAEEIIKKSGK.

Residues 8 to 282 enclose the tr-type G domain; it reads ENTRNLGIMA…AVVDYLPSPL (275 aa). GTP contacts are provided by residues 17–24, 81–85, and 135–138; these read AHIDAGKT, DTPGH, and NKMD.

This sequence belongs to the TRAFAC class translation factor GTPase superfamily. Classic translation factor GTPase family. EF-G/EF-2 subfamily.

It is found in the cytoplasm. Its function is as follows. Catalyzes the GTP-dependent ribosomal translocation step during translation elongation. During this step, the ribosome changes from the pre-translocational (PRE) to the post-translocational (POST) state as the newly formed A-site-bound peptidyl-tRNA and P-site-bound deacylated tRNA move to the P and E sites, respectively. Catalyzes the coordinated movement of the two tRNA molecules, the mRNA and conformational changes in the ribosome. This is Elongation factor G from Mesoplasma florum (strain ATCC 33453 / NBRC 100688 / NCTC 11704 / L1) (Acholeplasma florum).